We begin with the raw amino-acid sequence, 89 residues long: MTAGKQHINKSLLYEGRVVSNSMNKTVVILVETRKTHPKFKKIVRRSVRLKVHDEKNECVVGDKILAIETRPLSKEKRHRLYKIVEKAK.

Belongs to the universal ribosomal protein uS17 family. In terms of assembly, part of the 30S ribosomal subunit.

Its function is as follows. One of the primary rRNA binding proteins, it binds specifically to the 5'-end of 16S ribosomal RNA. In Leptospira interrogans serogroup Icterohaemorrhagiae serovar Lai (strain 56601), this protein is Small ribosomal subunit protein uS17.